The following is a 362-amino-acid chain: 45 kDa calcium-binding protein (362 aa).

Positions 1 to 36 (MVWPWVAMASRWGPLIGLAPCCLWLLGAVLLMDASA) are cleaved as a signal peptide. Residue asparagine 40 is glycosylated (N-linked (GlcNAc...) asparagine). EF-hand domains lie at 98-133 (RSRR…KTAE) and 137-172 (EAME…SKGH). Phosphoserine is present on serine 99. Residues aspartate 111, asparagine 113, aspartate 115, lysine 117, glutamate 122, aspartate 150, aspartate 152, aspartate 154, histidine 156, and glutamate 161 each coordinate Ca(2+). Threonine 193 bears the Phosphothreonine mark. 4 EF-hand domains span residues 197 to 232 (LENL…HSRG), 233 to 268 (MLRF…TVEN), 278 to 313 (WVKD…MNEY), and 314 to 349 (NALN…FTGS). Aspartate 213 is a binding site for Ca(2+). Threonine 217 carries the post-translational modification Phosphothreonine. Residues glutamate 220, aspartate 246, aspartate 248, aspartate 250, glutamine 252, and glutamate 257 each contribute to the Ca(2+) site. A Phosphothreonine modification is found at threonine 265. 3 residues coordinate Ca(2+): aspartate 291, asparagine 293, and aspartate 295. Phosphothreonine is present on threonine 299. Ca(2+) is bound by residues glutamate 302, aspartate 327, asparagine 329, asparagine 331, histidine 333, and glutamate 338. The tract at residues 309 to 362 (PMNEYNALNEAKQMIAVADENQNHHLEPEEVLKYSEFFTGSKLVDYARSVHEEF) is necessary for intracellular retention in Golgi apparatus lumen.

Belongs to the CREC family. Isoform 5 interacts with STXBP1; the interaction is enhanced in presence of calcium. Isoform 5 interacts with STX3. As to expression, ubiquitous. Isoform 5 is expressed in pancreas.

The protein localises to the golgi apparatus lumen. The protein resides in the cytoplasm. Its subcellular location is the cell membrane. It localises to the cell projection. It is found in the bleb. Functionally, may regulate calcium-dependent activities in the endoplasmic reticulum lumen or post-ER compartment. Its function is as follows. Isoform 5 may be involved in the exocytosis of zymogens by pancreatic acini. The polypeptide is 45 kDa calcium-binding protein (SDF4) (Homo sapiens (Human)).